The following is a 329-amino-acid chain: Protein-arginine N-acetylglucosaminyltransferase NleB1 (329 aa).

An N-beta-linked (GlcNAc) arginine; by autocatalysis glycan is attached at R13. 48-50 (QWF) contributes to the UDP-N-acetyl-alpha-D-glucosamine binding site. N-beta-linked (GlcNAc) arginine; by autocatalysis glycosylation is present at R53. Y72 contacts UDP-N-acetyl-alpha-D-glucosamine. The N-beta-linked (GlcNAc) arginine; by autocatalysis glycan is linked to R159. 219 to 222 (YLDA) contacts UDP-N-acetyl-alpha-D-glucosamine. Positions 221 to 223 (DAD) match the DXD motif motif. D223 serves as a coordination point for Mn(2+). The Proton acceptor role is filled by E253. R293 carries an N-beta-linked (GlcNAc) arginine; by autocatalysis glycan. Residues N320 and S322 each contribute to the Mn(2+) site. UDP-N-acetyl-alpha-D-glucosamine-binding positions include S322 and 327 to 329 (SSW).

Belongs to the glycosyltransferase NleB family. Mn(2+) serves as cofactor. Post-translationally, auto-glycosylated: arginine GlcNAcylation is required for activity toward death domain-containing host target proteins.

It localises to the secreted. The protein localises to the host cytoplasm. It carries out the reaction L-arginyl-[protein] + UDP-N-acetyl-alpha-D-glucosamine = N(omega)-(N-acetyl-beta-D-glucosaminyl)-L-arginyl-[protein] + UDP + H(+). Protein-arginine N-acetylglucosaminyltransferase activity is inhibited by 100066N compound (flavone analog) and 102644N compound (a substituted isoxazole). Functionally, protein-arginine N-acetylglucosaminyltransferase effector that disrupts TNF signaling in infected cells, including NF-kappa-B signaling, apoptosis and necroptosis. Acts by catalyzing the transfer of a single N-acetylglucosamine (GlcNAc) to a conserved arginine residue in the death domain of host proteins such as FADD: arginine GlcNAcylation prevents homotypic/heterotypic death domain interactions and assembly of the oligomeric TNF-alpha receptor complex, thereby disrupting TNF signaling. Also acts on host proteins without a death domain: catalyzes arginine GlcNAcylation of host GAPDH protein, thereby preventing GAPDH interaction with TRAF2, leading to inhibit NF-kappa-B signaling. Catalyzes auto-GlcNAcylation, which is required for activity toward death domain-containing host target proteins. This chain is Protein-arginine N-acetylglucosaminyltransferase NleB1, found in Escherichia coli O157:H7.